Here is a 93-residue protein sequence, read N- to C-terminus: Auxin-responsive protein SAUR26 (93 aa).

It belongs to the ARG7 family. In terms of assembly, interacts with PP2C-D1. Higher expression in thermo-responsive cultivars (e.g. cv. Alst-1, cv. Ang-0 and cv. Com-0) than in low thermo-responsive cultivars (e.g. cv. Dja-1, cv. El-0 and cv. Kon).

The protein resides in the cell membrane. In terms of biological role, provide a mechanistic link between auxin and plasma membrane H(+)-ATPases (PM H(+)-ATPases, e.g. AHA1 and AHA2), and triggers PM H(+)-ATPases activity by promoting phosphorylation of their C-terminal autoinhibitory domain as a result of PP2C-D subfamily of type 2C phosphatases inhibition, thus leading to the acidification of the apoplast and the facilitation of solutes and water uptake to drive cell expansion. Functions as a positive effectors of cell expansion through modulation of auxin transport. Involved in thermo-responsiveness of plant architecture. Enhances plasma membrane H(+)-ATPase. Probably involved in light intensity mediated root development. The protein is Auxin-responsive protein SAUR26 of Arabidopsis thaliana (Mouse-ear cress).